We begin with the raw amino-acid sequence, 420 residues long: Disease resistance protein CHS1 (420 aa).

Positions arginine 12–phenylalanine 167 constitute a TIR domain. Glutamate 86 is a catalytic residue. Positions methionine 185–methionine 406 constitute an NB-ARC domain.

Mostly expressed in leaves and flowers (mainly in sepals), and, at a lower intensity, in stems. Present at low levels in roots and seeds.

It is found in the cytoplasm. It localises to the nucleus. The enzyme catalyses NAD(+) + H2O = ADP-D-ribose + nicotinamide + H(+). Functionally, confers resistance to low temperatures by limiting chloroplast damage and cell death, thus maintaining growth homeostasis. Regulates steryl-esters and sterols accumulation. Limits leaf necrosis associated with virulent bacterial infection (e.g. Pseudomonas syringae pv. tomato DC3000). The sequence is that of Disease resistance protein CHS1 from Arabidopsis thaliana (Mouse-ear cress).